Here is a 394-residue protein sequence, read N- to C-terminus: NAD(P)H-quinone oxidoreductase subunit H (394 aa).

This sequence belongs to the complex I 49 kDa subunit family. As to quaternary structure, NDH-1 can be composed of about 15 different subunits; different subcomplexes with different compositions have been identified which probably have different functions.

The protein localises to the cellular thylakoid membrane. The catalysed reaction is a plastoquinone + NADH + (n+1) H(+)(in) = a plastoquinol + NAD(+) + n H(+)(out). It carries out the reaction a plastoquinone + NADPH + (n+1) H(+)(in) = a plastoquinol + NADP(+) + n H(+)(out). Functionally, NDH-1 shuttles electrons from an unknown electron donor, via FMN and iron-sulfur (Fe-S) centers, to quinones in the respiratory and/or the photosynthetic chain. The immediate electron acceptor for the enzyme in this species is believed to be plastoquinone. Couples the redox reaction to proton translocation, and thus conserves the redox energy in a proton gradient. Cyanobacterial NDH-1 also plays a role in inorganic carbon-concentration. This chain is NAD(P)H-quinone oxidoreductase subunit H, found in Thermosynechococcus vestitus (strain NIES-2133 / IAM M-273 / BP-1).